The primary structure comprises 419 residues: UDP-N-acetylglucosamine 1-carboxyvinyltransferase (419 aa).

Residue 22–23 (KN) coordinates phosphoenolpyruvate. A UDP-N-acetyl-alpha-D-glucosamine-binding site is contributed by R93. Catalysis depends on C117, which acts as the Proton donor. C117 is subject to 2-(S-cysteinyl)pyruvic acid O-phosphothioketal. UDP-N-acetyl-alpha-D-glucosamine-binding residues include D307 and I329.

This sequence belongs to the EPSP synthase family. MurA subfamily.

It is found in the cytoplasm. The enzyme catalyses phosphoenolpyruvate + UDP-N-acetyl-alpha-D-glucosamine = UDP-N-acetyl-3-O-(1-carboxyvinyl)-alpha-D-glucosamine + phosphate. Its pathway is cell wall biogenesis; peptidoglycan biosynthesis. Cell wall formation. Adds enolpyruvyl to UDP-N-acetylglucosamine. The protein is UDP-N-acetylglucosamine 1-carboxyvinyltransferase of Shewanella piezotolerans (strain WP3 / JCM 13877).